Here is an 82-residue protein sequence, read N- to C-terminus: Exodeoxyribonuclease 7 small subunit (82 aa).

It belongs to the XseB family. Heterooligomer composed of large and small subunits.

It is found in the cytoplasm. It catalyses the reaction Exonucleolytic cleavage in either 5'- to 3'- or 3'- to 5'-direction to yield nucleoside 5'-phosphates.. Functionally, bidirectionally degrades single-stranded DNA into large acid-insoluble oligonucleotides, which are then degraded further into small acid-soluble oligonucleotides. The protein is Exodeoxyribonuclease 7 small subunit of Pectobacterium atrosepticum (strain SCRI 1043 / ATCC BAA-672) (Erwinia carotovora subsp. atroseptica).